The chain runs to 1051 residues: Probable valine--tRNA ligase, mitochondrial (1051 aa).

The N-terminal 20 residues, 1 to 20 (MNKLLFLSKKSSTSNLYRFY), are a transit peptide targeting the mitochondrion. The short motif at 71 to 81 (PNVTGSLHIGH) is the 'HIGH' region element. A 'KMSKS' region motif is present at residues 606–610 (KMSKS). Position 609 (K609) interacts with ATP. Residues 972–1019 (KELQISIEFDKEINNQLNQKLINPNQSNDKKILKLENFIKQLQDEIDN) are a coiled coil.

It belongs to the class-I aminoacyl-tRNA synthetase family.

It is found in the mitochondrion. The catalysed reaction is tRNA(Val) + L-valine + ATP = L-valyl-tRNA(Val) + AMP + diphosphate. This is Probable valine--tRNA ligase, mitochondrial (valS2) from Dictyostelium discoideum (Social amoeba).